The chain runs to 351 residues: MLKNDLFLRALKRQPCSRTPIWVMRQAGRYLPEYRAIREKTDFLTLCKTPELAAEVTIQPVELMGVDAAIIFSDILVVNEAMGMDVEIIETKGIKLSPPIRSQVDIDRLSVPDVHDKLGYVLDAIRLTKKELDNRVPLIGFSGAAWTLFTYAVEGGGSKNYAFAKKMMFRDPKMAHMLLSKISSVISDYVCAQVEAGADAIQIFDSWASALSEDDYREFALPYIKENVQALKTKYPDIPVIVFSKDCNTILEDIAATGCDAVGLGWGIDIAKARTILGDRVCLQGNMDPTVLYGTPEKIKAEAGKILKQFGQHTANSGHVFNLGHGILPDVDPANLKLLVEFVKEESAKYH.

Residues 25–29, Asp-74, Tyr-151, Ser-206, and His-325 contribute to the substrate site; that span reads RQAGR.

It belongs to the uroporphyrinogen decarboxylase family. Homodimer.

Its subcellular location is the cytoplasm. The catalysed reaction is uroporphyrinogen III + 4 H(+) = coproporphyrinogen III + 4 CO2. The protein operates within porphyrin-containing compound metabolism; protoporphyrin-IX biosynthesis; coproporphyrinogen-III from 5-aminolevulinate: step 4/4. In terms of biological role, catalyzes the decarboxylation of four acetate groups of uroporphyrinogen-III to yield coproporphyrinogen-III. The chain is Uroporphyrinogen decarboxylase from Chlorobium phaeovibrioides (strain DSM 265 / 1930) (Prosthecochloris vibrioformis (strain DSM 265)).